The primary structure comprises 51 residues: MARYRCCLTHSRSRCRRRRRRRCRRRRRRFGRRRRRRVCCRRYTVVRCTRQ.

2 disulfide bridges follow: C7–C15 and C40–C48.

The protein belongs to the protamine P1 family. Cross-linked by interchain disulfide bonds around the DNA-helix. As to expression, testis.

It is found in the nucleus. It localises to the chromosome. Protamines substitute for histones in the chromatin of sperm during the haploid phase of spermatogenesis. They compact sperm DNA into a highly condensed, stable and inactive complex. In Capra hircus (Goat), this protein is Sperm protamine P1 (PRM1).